Consider the following 427-residue polypeptide: Pre-mRNA-splicing factor PRP46 (427 aa).

7 WD repeats span residues 113-153, 156-195, 198-237, 240-281, 283-322, 324-362, and 373-412; these read GHHG…LKVT, AHDM…AIRN, GHLS…PVMT, GHKG…KVLT, HQRT…TNFV, QDLD…KYQT, and ESER…SQDT. Residues 404–427 form a disordered region; the sequence is QDETASQDTHPNLPWNPKLDSQRL.

The protein belongs to the WD repeat PRL1/PRL2 family. In terms of assembly, associated with the spliceosome.

The protein resides in the cytoplasm. The protein localises to the nucleus. Involved in pre-mRNA splicing and required for cell cycle progression at G2/M. The chain is Pre-mRNA-splicing factor PRP46 (PRP46) from Candida glabrata (strain ATCC 2001 / BCRC 20586 / JCM 3761 / NBRC 0622 / NRRL Y-65 / CBS 138) (Yeast).